The chain runs to 29 residues: Cyclotide psyleio A (29 aa).

The segment at residues 1-29 (GLPICGETCFTGTCNTPGCSCTYPICTRD) is a cross-link (cyclopeptide (Gly-Asp)). 3 disulfide bridges follow: Cys5/Cys19, Cys9/Cys21, and Cys14/Cys26.

Post-translationally, this is a cyclic peptide.

Probably participates in a plant defense mechanism. The sequence is that of Cyclotide psyleio A from Psychotria brachyceras.